A 79-amino-acid chain; its full sequence is Defensin-like protein 109 (79 aa).

Residues M1–C24 form the signal peptide. 4 cysteine pairs are disulfide-bonded: C41-C76, C47-C68, C54-C74, and C58-C75.

Belongs to the DEFL family.

The protein localises to the secreted. The sequence is that of Defensin-like protein 109 from Arabidopsis thaliana (Mouse-ear cress).